A 191-amino-acid chain; its full sequence is IMP cyclohydrolase (191 aa).

It belongs to the archaeal IMP cyclohydrolase family.

The catalysed reaction is IMP + H2O = 5-formamido-1-(5-phospho-D-ribosyl)imidazole-4-carboxamide. It participates in purine metabolism; IMP biosynthesis via de novo pathway; IMP from 5-formamido-1-(5-phospho-D-ribosyl)imidazole-4-carboxamide: step 1/1. Catalyzes the cyclization of 5-formylamidoimidazole-4-carboxamide ribonucleotide to IMP. This is IMP cyclohydrolase from Natronomonas pharaonis (strain ATCC 35678 / DSM 2160 / CIP 103997 / JCM 8858 / NBRC 14720 / NCIMB 2260 / Gabara) (Halobacterium pharaonis).